We begin with the raw amino-acid sequence, 196 residues long: dITP/XTP pyrophosphatase (196 aa).

7 to 12 is a substrate binding site; that stretch reads THNPGK. Positions 40 and 69 each coordinate Mg(2+). The active-site Proton acceptor is the D69. Substrate-binding positions include S70, 150 to 153, K173, and 178 to 179; these read FGYD and HR.

This sequence belongs to the HAM1 NTPase family. In terms of assembly, homodimer. Requires Mg(2+) as cofactor.

The enzyme catalyses XTP + H2O = XMP + diphosphate + H(+). It carries out the reaction dITP + H2O = dIMP + diphosphate + H(+). It catalyses the reaction ITP + H2O = IMP + diphosphate + H(+). Its function is as follows. Pyrophosphatase that catalyzes the hydrolysis of nucleoside triphosphates to their monophosphate derivatives, with a high preference for the non-canonical purine nucleotides XTP (xanthosine triphosphate), dITP (deoxyinosine triphosphate) and ITP. Seems to function as a house-cleaning enzyme that removes non-canonical purine nucleotides from the nucleotide pool, thus preventing their incorporation into DNA/RNA and avoiding chromosomal lesions. In Exiguobacterium sp. (strain ATCC BAA-1283 / AT1b), this protein is dITP/XTP pyrophosphatase.